A 589-amino-acid polypeptide reads, in one-letter code: Chromodomain Y-like protein (589 aa).

A compositionally biased stretch (polar residues) spans 1–10 (MGLGSSQPST). A disordered region spans residues 1 to 57 (MGLGSSQPSTKEAEPCTLQEKEEHPVDDTRQQNNAVPATVSDPDQVSPAVQDAETQV). Residues 11–30 (KEAEPCTLQEKEEHPVDDTR) show a composition bias toward basic and acidic residues. The 61-residue stretch at 55-115 (TQVESIVDKR…RHNERQKEGT (61 aa)) folds into the Chromo domain. The interaction with EZH2 stretch occupies residues 55 to 300 (TQVESIVDKR…TIQTSVTGVT (246 aa)). Serine 82 is subject to Phosphoserine. Residues 110–155 (RQKEGTLARANRASPSNARKQISRSTHSALSKTNPKALVVGKDHES) are disordered. A compositionally biased stretch (low complexity) spans 117-128 (ARANRASPSNAR). Lysine 129 is subject to N6,N6,N6-trimethyllysine; by EHMT2; alternate. Lysine 129 is subject to N6,N6-dimethyllysine; by EHMT2; alternate. Lysine 129 is modified (N6-methyllysine; by EHMT2; alternate). The segment covering 132–143 (SRSTHSALSKTN) has biased composition (polar residues). Residues serine 164, serine 195, and serine 210 each carry the phosphoserine modification. Residues 202 to 224 (SIDGFHGESPEKLDQGAEDTVTP) form a disordered region. The span at 206 to 216 (FHGESPEKLDQ) shows a compositional bias: basic and acidic residues. Residues 353-585 (SENNSLNPEV…DSMLKYLQRK (233 aa)) are acetyl-CoA-binding domain.

Forms multimers and multimerization is required for stable binding to chromatin. Interacts with HDAC1 and HDAC2 via its C-terminal acetyl-CoA-binding domain. Interacts with EZH2, EED, SUZ12, REST, EHMT1 and EHMT2. Part of a complex containing at least CDYL, REST, WIZ, SETB1, EHMT1 and EHMT2. Part of a complex containing at least CDYL, MIER1, MIER2, HDAC1 and HDAC2. Interacts with CHAF1A and CHAF1B; bridging the CAF-1 complex to the MCM2-7 (MCM) complex. Interacts with MCM3 and MCM5; bridging the CAF-1 complex to the MCM2-7 (MCM) complex. Recruited to Xist RNA-coated X chromosome. Interacts with EHMT2 and PRDM9; interaction only takes place when PRDM9 is bound to hotspot DNA. As to expression, expressed in the brain, with expression in the hippocampal dentate gyrus, CA1, striatum and cortex (at protein level). Expressed in the prelimbic cortex.

It localises to the nucleus. The protein localises to the chromosome. The enzyme catalyses 3-hydroxybutanoyl-CoA = (2E)-butenoyl-CoA + H2O. Functionally, chromatin reader protein that recognizes and binds histone H3 trimethylated at 'Lys-9', dimethylated at 'Lys-27' and trimethylated at 'Lys-27' (H3K9me3, H3K27me2 and H3K27me3, respectively). Part of multimeric repressive chromatin complexes, where it is required for transmission and restoration of repressive histone marks, thereby preserving the epigenetic landscape. Required for chromatin targeting and maximal enzymatic activity of Polycomb repressive complex 2 (PRC2); acts as a positive regulator of PRC2 activity by bridging the pre-existing histone H3K27me3 and newly recruited PRC2 on neighboring nucleosomes. Acts as a corepressor for REST by facilitating histone-lysine N-methyltransferase EHMT2 recruitment and H3K9 dimethylation at REST target genes for repression. Involved in X chromosome inactivation in females: recruited to Xist RNA-coated X chromosome and facilitates propagation of H3K9me2 by anchoring EHMT2. Promotes EZH2 accumulation and H3K27me3 methylation at DNA double strand breaks (DSBs), thereby facilitating transcriptional repression at sites of DNA damage and homology-directed repair of DSBs. Required for neuronal migration during brain development by repressing expression of RHOA. By repressing the expression of SCN8A, contributes to the inhibition of intrinsic neuronal excitability and epileptogenesis. In addition to acting as a chromatin reader, acts as a hydro-lyase. Shows crotonyl-coA hydratase activity by mediating the conversion of crotonyl-CoA ((2E)-butenoyl-CoA) to beta-hydroxybutyryl-CoA (3-hydroxybutanoyl-CoA), thereby acting as a negative regulator of histone crotonylation. Histone crotonylation is required during spermatogenesis; down-regulation of histone crotonylation by CDYL regulates the reactivation of sex chromosome-linked genes in round spermatids and histone replacement in elongating spermatids. By regulating histone crotonylation and trimethylation of H3K27, may be involved in stress-induced depression-like behaviors, possibly by regulating VGF expression. Displays acetyltransferase activity toward tubulin in vitro; such activity is however unsure in vivo and additional evidences would be required to confirm this result. In terms of biological role, not able to recognize and bind histone H3K9me3, histone H3K27me2 and histone H3K27me3, due to the presence of a N-terminal extension that inactivates the chromo domain. The polypeptide is Chromodomain Y-like protein (Rattus norvegicus (Rat)).